The following is a 390-amino-acid chain: Sister chromatid cohesion protein DCC1 (390 aa).

It belongs to the DCC1 family. In terms of assembly, component of the ctf18-RFC complex which consists of ctf18, ctf8, dscc1 and the RFC complex.

It is found in the nucleus. In terms of biological role, loads pcna onto primed templates regulating velocity, spacing and restart activity of replication forks. May couple DNA replication to sister chromatid cohesion. This Xenopus laevis (African clawed frog) protein is Sister chromatid cohesion protein DCC1 (dscc1).